A 317-amino-acid polypeptide reads, in one-letter code: Transaldolase (317 aa).

Catalysis depends on Lys-126, which acts as the Schiff-base intermediate with substrate.

Belongs to the transaldolase family. Type 1 subfamily. Homodimer.

It is found in the cytoplasm. The enzyme catalyses D-sedoheptulose 7-phosphate + D-glyceraldehyde 3-phosphate = D-erythrose 4-phosphate + beta-D-fructose 6-phosphate. It participates in carbohydrate degradation; pentose phosphate pathway; D-glyceraldehyde 3-phosphate and beta-D-fructose 6-phosphate from D-ribose 5-phosphate and D-xylulose 5-phosphate (non-oxidative stage): step 2/3. Its function is as follows. Transaldolase is important for the balance of metabolites in the pentose-phosphate pathway. The chain is Transaldolase from Burkholderia ambifaria (strain MC40-6).